Consider the following 342-residue polypeptide: Methionine import ATP-binding protein MetN 2 (342 aa).

The 240-residue stretch at 2-241 (ISIEGLSKVF…PKQLVTRKFV (240 aa)) folds into the ABC transporter domain. 38-45 (GYSGAGKS) provides a ligand contact to ATP.

It belongs to the ABC transporter superfamily. Methionine importer (TC 3.A.1.24) family. As to quaternary structure, the complex is composed of two ATP-binding proteins (MetN), two transmembrane proteins (MetI) and a solute-binding protein (MetQ).

The protein resides in the cell membrane. It catalyses the reaction L-methionine(out) + ATP + H2O = L-methionine(in) + ADP + phosphate + H(+). It carries out the reaction D-methionine(out) + ATP + H2O = D-methionine(in) + ADP + phosphate + H(+). In terms of biological role, part of the ABC transporter complex MetNIQ involved in methionine import. Responsible for energy coupling to the transport system. The protein is Methionine import ATP-binding protein MetN 2 of Oceanobacillus iheyensis (strain DSM 14371 / CIP 107618 / JCM 11309 / KCTC 3954 / HTE831).